A 25-amino-acid polypeptide reads, in one-letter code: GGPAGKQNAVNQLLVLIYDPKSYKD.

The protein belongs to the tyrosinase family. Hemocyanin subfamily. As to expression, hemolymph.

The protein localises to the secreted. The protein resides in the extracellular space. Functionally, hemocyanins are copper-containing oxygen carriers occurring freely dissolved in the hemolymph of many mollusks and arthropods. This is Hemocyanin subunit 3 from Maja squinado (Mediterranean spider crab).